Reading from the N-terminus, the 2282-residue chain is Zonadhesin (2282 aa).

2 consecutive MAM domains span residues 1 to 147 and 150 to 315; these read MFFA…PCGE and PQCV…TCHV. Over 1-2235 the chain is Extracellular; that stretch reads MFFATGRASA…VLLPPKPDTS (2235 aa). N112 and N272 each carry an N-linked (GlcNAc...) asparagine glycan. Residues 315-498 form a 26 X approximate heptapeptide repeats (mucin-like domain) region; that stretch reads VPVPPVIPIK…STTTTPSPTT (184 aa). A compositionally biased stretch (low complexity) spans 333–356; the sequence is PTVPAEGTTEPPEGTIELPEGTTK. Residues 333–495 are disordered; the sequence is PTVPAEGTTE…TTLSTTTTPS (163 aa). A compositionally biased stretch (acidic residues) spans 360–369; the sequence is ETTELPEEIT. Over residues 379 to 398 the composition is skewed to pro residues; it reads TEPPTVPTEPPTVPTEPPTV. Low complexity-rich tracts occupy residues 399–420 and 427–495; these read PTEK…TSIP and PTEK…TTPS. Positions 501 to 550 constitute a TIL 1 domain; that stretch reads CPANAHYESCACPASCKHPKASCKPPCQPGCVCDPGLVFSNNSCIKASSC. N-linked (GlcNAc...) asparagine glycans are attached at residues N541 and N569. The VWFC 1 domain occupies 551–605; that stretch reads PCLYNNNNYEPEAEWFSPNCTELCHCWPGGRIECQISQCKTHTKCQLKNGQYECQ. The VWFD 1 domain maps to 610-787; that stretch reads ATCFVYGDPH…WAQDEDKECQ (178 aa). Intrachain disulfides connect C612–C747 and C634–C786. Residues 881 to 934 form the TIL 2 domain; sequence CPPNSRYSLCTSPCPKTCHTGYVGMPCPEQCLEGCECNPGFILSGLECVPSAQC. The VWFC 2 domain occupies 935–990; sequence GCLDPSRGYFKVGEQWFKSDCKQLCICEGSNQIRCQPWKCGPHEVCSQQSGIYGCH. One can recognise a VWFD 2 domain in the interval 995-1176; the sequence is ATCSASGDPH…LEEGSETGCF (182 aa). Cystine bridges form between C997/C1136 and C1019/C1175. N-linked (GlcNAc...) asparagine glycans are attached at residues N1141, N1259, N1270, N1355, N1467, and N1483. A TIL 3 domain is found at 1267 to 1322; sequence CPPNSSYSPCGSPCPGTCLSLNHPKDCPITLPCVEGCECQNGYILSGTSCVPLNQC. A VWFC 3 domain is found at 1323-1379; it reads GCTDFEGSYHLVRESWYTDNTCSRLCTCSLHNNITCRQTACKPGQQCWAVDGLLRCR. The VWFD 3 domain occupies 1384 to 1564; it reads GVCQVTGDSR…KDNNIDPNCQ (181 aa). Intrachain disulfides connect C1386-C1525 and C1408-C1563. Residues 1561–1588 are disordered; it reads PNCQKSQEGKGKPQEEQGPSGSSKKASC. The segment covering 1577 to 1586 has biased composition (polar residues); that stretch reads QGPSGSSKKA. N-linked (GlcNAc...) asparagine glycosylation is present at N1662. In terms of domain architecture, TIL 4 spans 1670–1726; it reads CPAYSTYTNCLPSCSPSCFDPDGRCEGARAPSSCAEGCTCQPGYVLSKNKCVAKDQC. The region spanning 1727-1782 is the VWFC 4 domain; the sequence is SCRDAQGGSIPSGKSWVSSGCSQKCACTEGSIQCRAFHCPSRSHCKLNSNGNSNCV. One can recognise a VWFD 4 domain in the interval 1787 to 1963; sequence DQCSIFGGPH…SWEVKTEDSV (177 aa). A disulfide bridge links C1789 with C1926. Residue N1997 is glycosylated (N-linked (GlcNAc...) asparagine). The TIL 5 domain maps to 2076–2129; the sequence is CPANTVYQSCMTPCPESCANLAAPRDCEGPCVEGCASLPGYAFSGAQSLPLANC. Residues 2130–2184 form the VWFC 5 domain; it reads GCTSNGIYYQLGHSFVTADCSQRCTCASSGVLLCEPFSCRPGESCTLGNLTRGCF. N-linked (GlcNAc...) asparagine glycosylation is present at N2178. The region spanning 2185–2221 is the EGF-like domain; that stretch reads RESPCLRNPCQNDGRCREQGTSFTCECEPGYGGHLCT. 3 disulfide bridges follow: C2189-C2200, C2194-C2209, and C2211-C2220. The helical transmembrane segment at 2236 to 2256 threads the bilayer; the sequence is NLVAILLGMLVSLVVTVPVLA. Topologically, residues 2257–2282 are cytoplasmic; that stretch reads RKCVSRKRRRWREKTQSEPRSAPGRR.

Probably forms covalent oligomers.

Its subcellular location is the cell membrane. Functionally, binds in a species-specific manner to the zona pellucida of the egg. May be involved in gamete recognition and/or signaling. The protein is Zonadhesin (ZAN) of Oryctolagus cuniculus (Rabbit).